Consider the following 307-residue polypeptide: F-box protein At5g03100 (307 aa).

The 47-residue stretch at 8 to 54 (VDFISSLPDEILHHILANTPTKLAIRTSVLSKRWKHVWYETPSISIV) folds into the F-box domain.

The protein is F-box protein At5g03100 of Arabidopsis thaliana (Mouse-ear cress).